A 282-amino-acid chain; its full sequence is Bis(5'-nucleosyl)-tetraphosphatase, symmetrical (282 aa).

The protein belongs to the Ap4A hydrolase family.

The catalysed reaction is P(1),P(4)-bis(5'-adenosyl) tetraphosphate + H2O = 2 ADP + 2 H(+). Its function is as follows. Hydrolyzes diadenosine 5',5'''-P1,P4-tetraphosphate to yield ADP. In Shigella dysenteriae serotype 1 (strain Sd197), this protein is Bis(5'-nucleosyl)-tetraphosphatase, symmetrical.